The primary structure comprises 226 residues: Tyramine N-feruloyltransferase 10/30 (226 aa).

Residues 29-45 are important in binding site and for catalytic activity; that stretch reads HIYKLFYQIHEYHNYTH. In terms of domain architecture, N-acetyltransferase spans 72–222; it reads VLLLEVSPTP…VGDALQKYAD (151 aa).

It belongs to the acetyltransferase family. Homodimer.

The protein resides in the cytoplasm. It carries out the reaction tyramine + (E)-feruloyl-CoA = N-[(E)-feruloyl]tyramine + CoA + H(+). With respect to regulation, inhibited by (2-hydroxyphenyl)amino sulfinyl acetic acid 1,1-dimethylethyl ester, by DEPC and by N-ethylmaleimide. Its function is as follows. Synthesizes amides which are involved in stress response in the cell wall. Catalyzes the synthesis of hydroxycinnamic acid amides from hydroxycinnamoyl-CoA thioesters and various hydroxyphenylethylamines such as 4-coumaroyl-CoA and sinapoyl-CoA. The protein is Tyramine N-feruloyltransferase 10/30 (THT10) of Nicotiana tabacum (Common tobacco).